A 378-amino-acid chain; its full sequence is Protein RecA (378 aa).

Residues 1-20 (MAAKKDKSVPDSKITDKEGK) form a disordered region. Residue 80–87 (GAESSGKT) coordinates ATP. The interval 344-378 (GPVDKKKKKSKKEASSDDTDDENLEIDDAIDENND) is disordered. Over residues 359–378 (SDDTDDENLEIDDAIDENND) the composition is skewed to acidic residues.

Belongs to the RecA family.

It is found in the cytoplasm. Functionally, can catalyze the hydrolysis of ATP in the presence of single-stranded DNA, the ATP-dependent uptake of single-stranded DNA by duplex DNA, and the ATP-dependent hybridization of homologous single-stranded DNAs. It interacts with LexA causing its activation and leading to its autocatalytic cleavage. The chain is Protein RecA from Fusobacterium nucleatum subsp. nucleatum (strain ATCC 25586 / DSM 15643 / BCRC 10681 / CIP 101130 / JCM 8532 / KCTC 2640 / LMG 13131 / VPI 4355).